The sequence spans 231 residues: UPF0702 transmembrane protein YetF (231 aa).

Transmembrane regions (helical) follow at residues 5–25, 33–53, and 59–79; these read LSVAVELVCGLGILFIILKLL, ITPFDFISALILGELVGNAVY, and IKEIIFASLLWGVLIYIIEFI.

The protein belongs to the UPF0702 family.

It is found in the cell membrane. This Bacillus subtilis (strain 168) protein is UPF0702 transmembrane protein YetF (yetF).